Here is a 65-residue protein sequence, read N- to C-terminus: Large ribosomal subunit protein uL29 (65 aa).

Belongs to the universal ribosomal protein uL29 family.

This is Large ribosomal subunit protein uL29 from Lactobacillus acidophilus (strain ATCC 700396 / NCK56 / N2 / NCFM).